Reading from the N-terminus, the 355-residue chain is Mu-like prophage FluMu I protein (355 aa).

Belongs to the peptidase U35 family.

In terms of biological role, potential protease involved in virion morphogenesis. This is Mu-like prophage FluMu I protein from Haemophilus influenzae (strain ATCC 51907 / DSM 11121 / KW20 / Rd).